A 100-amino-acid polypeptide reads, in one-letter code: Large ribosomal subunit protein uL23 (100 aa).

It belongs to the universal ribosomal protein uL23 family. Part of the 50S ribosomal subunit. Contacts protein L29, and trigger factor when it is bound to the ribosome.

One of the early assembly proteins it binds 23S rRNA. One of the proteins that surrounds the polypeptide exit tunnel on the outside of the ribosome. Forms the main docking site for trigger factor binding to the ribosome. This chain is Large ribosomal subunit protein uL23, found in Shewanella pealeana (strain ATCC 700345 / ANG-SQ1).